A 242-amino-acid chain; its full sequence is Venom nerve growth factor 2 (242 aa).

An N-terminal signal peptide occupies residues 1–18; the sequence is MSMLCYTLIIAFLIGIWA. Residues 19–125 constitute a propeptide that is removed on maturation; that stretch reads APKSEDNVPL…ALNRNIRSKR (107 aa). Positions 46-69 are disordered; it reads KALKTSRNTDQRHPAPKKAEDQEL. The segment covering 52–66 has biased composition (basic and acidic residues); that stretch reads RNTDQRHPAPKKAED. 3 disulfides stabilise this stretch: Cys-139-Cys-203, Cys-181-Cys-231, and Cys-191-Cys-233. Asn-147 carries an N-linked (GlcNAc...) asparagine glycan.

This sequence belongs to the NGF-beta family. As to quaternary structure, homodimer; non-covalently linked. As to expression, expressed by the venom gland.

It is found in the secreted. Functionally, nerve growth factor is important for the development and maintenance of the sympathetic and sensory nervous systems. It stimulates division and differentiation of sympathetic and embryonic sensory neurons as well as basal forebrain cholinergic neurons in the brain. Its relevance in the snake venom is not clear. However, it has been shown to inhibit metalloproteinase-dependent proteolysis of platelet glycoprotein Ib alpha, suggesting a metalloproteinase inhibition to prevent metalloprotease autodigestion and/or protection against prey proteases. Binds a lipid between the two protein chains in the homodimer. The lipid-bound form promotes histamine relase from mouse mast cells, contrary to the lipid-free form. This is Venom nerve growth factor 2 from Demansia vestigiata (Lesser black whip snake).